A 1705-amino-acid polypeptide reads, in one-letter code: MGSRRAPSRGWGAGGRSGAGGDGEDDGPVWIPSPASRSYLLSVRPETSLSSNRLSHPSSGRSTFCSIIAQLTEETQPLFETTLKSRSVSEDSDVRFTCIVTGYPEPEVTWYKDDTELDRYCGLPKYEITHQGNRHTLQLYRCREEDAAIYQASAQNSKGIVSCSGVLEVGTMTEYKIHQRWFAKLKRKAAAKLREIEQSWKHEKAVPGEVDTLRKLSPDRFQRKRRLSGAQAPGPSVPTREPEGGTLAAWQEGETETAQHSGLGLINSFASGEVTTNGEAAPENGEDGEHGLLTYICDAMELGPQRALKEESGAKKKKKDEESKQGLRKPELEKAAQSRRSSENCIPSSDEPDSCGTQGPVGVEQVQTQPRGRAARGPGSSGTDSTRKPASAVGTPDKAQKAPGPGPGQEVYFSLKDMYLENTQAVRPLGEEGPQTLSVRAPGESPKGKAPLRARSEGVPGAPGQPTHSLTPQPTRPFNRKRFAPPKPKGEATTDSKPISSLSQAPECGAQSLGKAPPQASVQVPTPPARRRHGTRDSTLQGQAGHRTPGEVLECQTTTAPTMSASSSSDVASIGVSTSGSQGIIEPMDMETQEDGRTSANQRTGSKKNVQADGKIQVDGRTRGDGTQTAQRTRADRKTQVDAGTQESKRPQSDRSAQKGMMTQGRAETQLETTQAGEKIQEDRKAQADKGTQEDRRMQGEKGMQGEKGTQSEGSAPTAMEGQSEQEVATSLGPPSRTPKLPPTAGPRAPLNIECFVQTPEGSCFPKKPGCLPRSEEAVVTASRNHEQTVLGPLSGNLMLPAQPPHEGSVEQVGGERCRGPQSSGPVEAKQEDSPFQCPKEERPGGVPCMDQGGCPLAGLSQEVPTMPSLPGTGLTASPKAGPCSTPTSQHGSTATFLPSEDQVLMSSAPTLHLGLGTPTQSHPPETMATSSEGACAQVPDVEGRTPGPRSCDPGLIDSLKNYLLLLLKLSSTETSGAGGESQVGAATGGLVPSATLTPTVEVAGLSPRTSRRILERVENNHLVQSAQTLLLSPCTSRRLTGLLDREVQAGRQALAAARGSWGPGPSSLTVPAIVVDEEDPGLASEGASEGEGEVSPEGPGLLGASQESSMAGRLGEAGGQAAPGQGPSAESIAQEPSQEEKFPGEALTGLPAATPEELALGARRKRFLPKVRAAGDGEATTPEERESPTVSPRGPRKSLVPGSPGTPGRERRSPTQGRKASMLEVPRAEEELAAGDLGPSPKAGGLDTEVALDEGKQETLAKPRKAKDLLKAPQVIRKIRVEQFPDASGSLKLWCQFFNILSDSVLTWAKDQRPVGEVGRSAGDEGPAALAIVQASPVDCGVYRCTIHNEHGSASTDFCLSPEVLSGFISREEGEVGEEIEMTPMVFAKGLADSGCWGDKLFGRLVSEELRGGGYGCGLRKASQAKVIYGLEPIFESGRTCIIKVSSLLVFGPSSETSLVGRNYDVTIQGCKIQNMSREYCKIFAAEARAAPGFGEVPEIIPLYLIYRPANNIPYATLEEDLGKPLESYCSREWGCAEAPTASGSSEAMQKCQTFQHWLYQWTNGSFLVTDLAGVDWKMTDVQIATKLRGYQGLKESCFPALLDRFASSHQCNAYCELLGLTPLKGPEAAHPQAKAKGSKSPSAGRKGSQLSPQPQKKGLPSPQGTRKSAPSSKATPQASEPVTTQLLGQPPTQEEGSKAQGMR.

Residues methionine 1–glycine 10 show a composition bias toward low complexity. Positions methionine 1–serine 33 are disordered. The span at tryptophan 11–glycine 21 shows a compositional bias: gly residues. One can recognise an Ig-like 1 domain in the interval proline 77–glutamate 168. Residues aspartate 211–phenylalanine 221 show a composition bias toward basic and acidic residues. 5 disordered regions span residues aspartate 211–glycine 244, leucine 308–alanine 749, glycine 792–glycine 845, glycine 1082–glycine 1145, and arginine 1173–valine 1226. Serine 228 carries the phosphoserine modification. Basic and acidic residues predominate over residues leucine 308–serine 342. Low complexity predominate over residues proline 370–glycine 382. The span at aspartate 495 to glutamine 504 shows a compositional bias: polar residues. Positions threonine 557–serine 579 are enriched in low complexity. Residues threonine 598–asparagine 609 show a composition bias toward polar residues. Residues glutamate 647–alanine 657 are compositionally biased toward basic and acidic residues. The segment covering arginine 666–alanine 676 has biased composition (polar residues). Basic and acidic residues predominate over residues lysine 679–glycine 700. Positions lysine 708–alanine 729 are enriched in polar residues. The segment covering serine 736–alanine 745 has biased composition (pro residues). Positions alanine 829–proline 844 are enriched in basic and acidic residues. Over residues glycine 1120–glutamate 1131 the composition is skewed to low complexity. At serine 1222 the chain carries Phosphoserine. An Ig-like 2 domain is found at proline 1274–serine 1362. Cysteine 1296 and cysteine 1346 are oxidised to a cystine. The Alpha-type protein kinase domain maps to lysine 1390–leucine 1625. The disordered stretch occupies residues proline 1628–arginine 1705. The span at proline 1664–glutamate 1696 shows a compositional bias: polar residues.

The protein belongs to the protein kinase superfamily. Alpha-type protein kinase family. ALPK subfamily.

The protein resides in the nucleus. The enzyme catalyses L-seryl-[protein] + ATP = O-phospho-L-seryl-[protein] + ADP + H(+). It catalyses the reaction L-threonyl-[protein] + ATP = O-phospho-L-threonyl-[protein] + ADP + H(+). Its function is as follows. Involved in cardiomyocyte differentiation. The protein is Alpha-protein kinase 3 of Homo sapiens (Human).